The following is a 263-amino-acid chain: HTH-type transcriptional repressor NanR (263 aa).

Residues 1–22 (MGLMNAFDSQTEDSSPAIGRNL) form a disordered region. The HTH gntR-type domain maps to 30-98 (KKLSEMVEEE…NGERARVSRP (69 aa)). A DNA-binding region (H-T-H motif) is located at residues 58 to 77 (ERELMAFFNVGRPSVREALA).

Belongs to the NanR family.

Functionally, transcriptional repressor that controls expression of the genes required for the catabolism of sialic acids. The polypeptide is HTH-type transcriptional repressor NanR (Shigella dysenteriae serotype 1 (strain Sd197)).